The chain runs to 135 residues: C-type lectin BpLec (135 aa).

Disulfide bonds link C3–C14, C31–C131, C38–C133, and C106–C123. Residues 10 to 132 form the C-type lectin domain; sequence MNGLCYKIFD…CESKNAFLCQ (123 aa). The Ca(2+) site is built by Q96, D98, E104, N119, and D120. The Galactose-binding motif lies at 96-98; sequence QPD.

It belongs to the true venom lectin family. As to quaternary structure, homodimer; disulfide-linked. In terms of tissue distribution, expressed by the venom gland.

Its subcellular location is the secreted. Its function is as follows. This lectin displays hemagglutinating activity on dog (128'000 HU/mg) and cat erythrocytes, that is inhibited by beta-galactosides (D-galactose, D-lactose, and N-acetyl-D-galactosamine) and EDTA. In addition, has been shown to hemagglutinate promastigote forms of Leishmania amazonensis. Also inhibits Gram-positive (S.aureus ATCC 25923) (MIC is 31.25 ug/ml) but not Gram-negative (E.coli ATCC 25922) bacteria. Is a calcium-dependent lectin. This chain is C-type lectin BpLec, found in Bothrops pauloensis (Neuwied's lancehead).